The chain runs to 334 residues: MKNRVISLLMASLLLVLSVIVAPFYKAEAATVVNTPFVAVFSNFDSSQWEKADWANGSVFNCVWKPSQVTFSNGKMILTLDREYGGSYPYKSGEYRTKSFFGYGYYEVRMKAAKNVGIVSSFFTYTGPSDNNPWDEIDIEFLGKDTTKVQFNWYKNGVGGNEYLHNLGFDASQDFHTYGFEWRPDYIDFYVDGKKVYRGTRNIPVTPGKIMMNLWPGIGVDEWLGRYDGRTPLQAEYEYVKYYPNGVPQDNPTPTPTIAPSTPTNPNLPLKGDVNGDGHVNSSDYSLFKRYLLRVIDRFPVGDQSVADVNRDGRIDSTDLTMLKRYLIRAIPSL.

An N-terminal signal peptide occupies residues 1 to 27 (MKNRVISLLMASLLLVLSVIVAPFYKA). A GH16 domain is found at 28-248 (EAATVVNTPF…YVKYYPNGVP (221 aa)). The active-site Nucleophile is Glu136. Glu140 acts as the Proton donor in catalysis. The Dockerin domain occupies 267 to 334 (NLPLKGDVNG…RYLIRAIPSL (68 aa)).

This sequence belongs to the glycosyl hydrolase 16 family. May form part of a multienzyme complex (cellulosome).

The enzyme catalyses Hydrolysis of (1-&gt;4)-beta-D-glucosidic linkages in beta-D-glucans containing (1-&gt;3)- and (1-&gt;4)-bonds.. In Acetivibrio thermocellus (strain ATCC 27405 / DSM 1237 / JCM 9322 / NBRC 103400 / NCIMB 10682 / NRRL B-4536 / VPI 7372) (Clostridium thermocellum), this protein is Beta-glucanase (licB).